The primary structure comprises 356 residues: Serendipity locus protein beta (356 aa).

A C2H2-type 1; degenerate zinc finger spans residues 171-193 (IPCHICGEMFSSQEVLERHIKAD). C2H2-type zinc fingers lie at residues 201–223 (ATCN…MNLH), 229–251 (LECR…MEVH), 257–279 (YQCD…LMRH), 286–308 (LICE…LRTH), and 315–337 (YPCP…KRVH).

In terms of assembly, binds chromatin; requires N-terminal regions to form protein-protein contacts, in addition to DNA specific recognition by the zinc fingers.

The protein localises to the nucleus. Its function is as follows. Binds to the consensus DNA sequence 5'-YCAGAGATGCGCA-3'. The polypeptide is Serendipity locus protein beta (Sry-beta) (Drosophila melanogaster (Fruit fly)).